Here is a 421-residue protein sequence, read N- to C-terminus: Phosphatidylinositol 5-phosphate 4-kinase type-2 gamma (421 aa).

Ala-2 carries the N-acetylalanine modification. Phosphoserine is present on Ser-26. The 378-residue stretch at 43–420 (AADPLVGVFL…RFLDFITNIF (378 aa)) folds into the PIPK domain. The required for interaction with PIP5K1A stretch occupies residues 69–75 (VMLLPDD). Ser-349 is modified (phosphoserine).

In terms of assembly, interacts with PIP5K1A; the interaction inhibits PIP5K1A kinase activity. Phosphorylated, phosphorylation is induced by EGF.

It is found in the endoplasmic reticulum. Its subcellular location is the cytoplasm. It catalyses the reaction a 1,2-diacyl-sn-glycero-3-phospho-(1D-myo-inositol-5-phosphate) + ATP = a 1,2-diacyl-sn-glycero-3-phospho-(1D-myo-inositol-4,5-bisphosphate) + ADP + H(+). The enzyme catalyses 1,2-dihexadecanoyl-sn-glycero-3-phospho-(1D-myo-inositol-5-phosphate) + ATP = 1,2-dihexadecanoyl-sn-glycero-3-phospho-(1D-myo-inositol-4,5-bisphosphate) + ADP + H(+). It carries out the reaction 1,2-dihexadecanoyl-sn-glycero-3-phospho-(1D-myo-inositol-5-phosphate) + GTP = 1,2-dihexadecanoyl-sn-glycero-3-phospho-(1D-myo-inositol-4,5-bisphosphate) + GDP + H(+). In terms of biological role, phosphatidylinositol 5-phosphate 4-kinase with low enzymatic activity. May be a GTP sensor, has higher GTP-dependent kinase activity than ATP-dependent kinase activity. PIP4Ks negatively regulate insulin signaling through a catalytic-independent mechanism. They interact with PIP5Ks and suppress PIP5K-mediated PtdIns(4,5)P2 synthesis and insulin-dependent conversion to PtdIns(3,4,5)P3. In Pongo abelii (Sumatran orangutan), this protein is Phosphatidylinositol 5-phosphate 4-kinase type-2 gamma (PIP4K2C).